Reading from the N-terminus, the 202-residue chain is Outer-membrane lipoprotein carrier protein (202 aa).

A signal peptide spans Met1–Ser18.

This sequence belongs to the LolA family. Monomer.

It localises to the periplasm. Participates in the translocation of lipoproteins from the inner membrane to the outer membrane. Only forms a complex with a lipoprotein if the residue after the N-terminal Cys is not an aspartate (The Asp acts as a targeting signal to indicate that the lipoprotein should stay in the inner membrane). This is Outer-membrane lipoprotein carrier protein from Legionella pneumophila (strain Lens).